A 248-amino-acid chain; its full sequence is 4-hydroxy-tetrahydrodipicolinate reductase (248 aa).

NAD(+)-binding positions include 9-14 (GAKGRV), 77-79 (GTT), and 104-107 (APNF). The active-site Proton donor/acceptor is the His134. Residue His135 participates in (S)-2,3,4,5-tetrahydrodipicolinate binding. The Proton donor role is filled by Lys138. A (S)-2,3,4,5-tetrahydrodipicolinate-binding site is contributed by 144–145 (GT).

Belongs to the DapB family.

It localises to the cytoplasm. It carries out the reaction (S)-2,3,4,5-tetrahydrodipicolinate + NAD(+) + H2O = (2S,4S)-4-hydroxy-2,3,4,5-tetrahydrodipicolinate + NADH + H(+). The enzyme catalyses (S)-2,3,4,5-tetrahydrodipicolinate + NADP(+) + H2O = (2S,4S)-4-hydroxy-2,3,4,5-tetrahydrodipicolinate + NADPH + H(+). It participates in amino-acid biosynthesis; L-lysine biosynthesis via DAP pathway; (S)-tetrahydrodipicolinate from L-aspartate: step 4/4. Catalyzes the conversion of 4-hydroxy-tetrahydrodipicolinate (HTPA) to tetrahydrodipicolinate. This chain is 4-hydroxy-tetrahydrodipicolinate reductase, found in Corynebacterium aurimucosum (strain ATCC 700975 / DSM 44827 / CIP 107346 / CN-1) (Corynebacterium nigricans).